A 564-amino-acid polypeptide reads, in one-letter code: MSEITLGRYVFERIKQVGVNTIFGLPGDFNLSLLDKIYEVEGLRWAASLNELNAAYAADGYSRIKGLGVIITTFGVGELSALNGIAGAYAEHVGVLHIVGVPSLASQAKQLLLHHTLGNGDFDVFHRMSANISETTAMITDLAAAPAEIDRCIRTAYIAQRPVYLGLPANLVDLNVPAKLLETKIDLALKANDAEAENEVVETILALVADAKNPVILSDACASRHNVKAEVKQLIDATQFPAFVTPLGKGSIDEKHPRFGGVYVGTLSSPEVKQSVESADLILSVGALLSDFNTGSFSYSYQTKNIVEFHSDYIKIKNASFPGVQMKFVLEKLIAKVGAKIANYSPVPVPAGLPKNAPVADSTPLAQEWLWNELGEFLEEGDIVVTETGTSAFGINQTRFPTDAYGISQVLWGSIGYSVGAMVGATFAAEELDKAKRVILFVGDGSLQLTVQEIACLIRWGLKPYIFVLNNNGYTIEKLIHGPTAQYNMIQNWKQLRYLTNFGATDYEAIPVKTVGEWKKLTADPAFKKNSTIRLIEVFLPEMDAPSSLVAQANLTAAINAKQD.

Positions 28 and 115 each coordinate pyruvate. Thiamine diphosphate contacts are provided by residues Thr-390 and 413 to 415 (GSI). Asp-444 provides a ligand contact to Mg(2+). Thiamine diphosphate contacts are provided by residues 445 to 446 (GS) and 471 to 476 (NNGYTI). Asn-471 and Gly-473 together coordinate Mg(2+). Glu-477 is a pyruvate binding site.

Belongs to the TPP enzyme family. Homotetramer. Mg(2+) serves as cofactor. It depends on thiamine diphosphate as a cofactor.

The catalysed reaction is a 2-oxocarboxylate + H(+) = an aldehyde + CO2. It catalyses the reaction pyruvate + H(+) = acetaldehyde + CO2. This chain is Pyruvate decarboxylase (PDC), found in Hanseniaspora uvarum (Yeast).